Consider the following 395-residue polypeptide: 1-deoxy-D-xylulose 5-phosphate reductoisomerase (395 aa).

NADPH contacts are provided by Thr13, Gly14, Ser15, Ile16, Lys40, and Asn127. Lys128 lines the 1-deoxy-D-xylulose 5-phosphate pocket. Glu129 provides a ligand contact to NADPH. Mn(2+) is bound at residue Asp153. Positions 154, 155, 184, and 207 each coordinate 1-deoxy-D-xylulose 5-phosphate. Glu155 lines the Mn(2+) pocket. Residue Gly213 participates in NADPH binding. Residues Ser220, Asn225, Lys226, and Glu229 each contribute to the 1-deoxy-D-xylulose 5-phosphate site. Glu229 provides a ligand contact to Mn(2+).

It belongs to the DXR family. The cofactor is Mg(2+). Mn(2+) serves as cofactor.

The catalysed reaction is 2-C-methyl-D-erythritol 4-phosphate + NADP(+) = 1-deoxy-D-xylulose 5-phosphate + NADPH + H(+). Its pathway is isoprenoid biosynthesis; isopentenyl diphosphate biosynthesis via DXP pathway; isopentenyl diphosphate from 1-deoxy-D-xylulose 5-phosphate: step 1/6. Functionally, catalyzes the NADPH-dependent rearrangement and reduction of 1-deoxy-D-xylulose-5-phosphate (DXP) to 2-C-methyl-D-erythritol 4-phosphate (MEP). The protein is 1-deoxy-D-xylulose 5-phosphate reductoisomerase of Nitrosospira multiformis (strain ATCC 25196 / NCIMB 11849 / C 71).